A 178-amino-acid polypeptide reads, in one-letter code: Hypoxanthine-guanine phosphoribosyltransferase (178 aa).

Diphosphate is bound by residues Lys46 and Gly47. Asp103 contacts Mg(2+). Residue Asp106 is the Proton acceptor of the active site. GMP-binding positions include Lys134, 155-156, and Asp162; that span reads FL. Arg168 serves as a coordination point for diphosphate.

This sequence belongs to the purine/pyrimidine phosphoribosyltransferase family. Mg(2+) serves as cofactor.

The protein resides in the cytoplasm. The enzyme catalyses IMP + diphosphate = hypoxanthine + 5-phospho-alpha-D-ribose 1-diphosphate. It catalyses the reaction GMP + diphosphate = guanine + 5-phospho-alpha-D-ribose 1-diphosphate. Its pathway is purine metabolism; IMP biosynthesis via salvage pathway; IMP from hypoxanthine: step 1/1. The protein operates within purine metabolism; GMP biosynthesis via salvage pathway; GMP from guanine: step 1/1. In terms of biological role, purine salvage pathway enzyme that catalyzes the transfer of the ribosyl-5-phosphate group from 5-phospho-alpha-D-ribose 1-diphosphate (PRPP) to the N9 position of the 6-oxopurines hypoxanthine and guanine to form the corresponding ribonucleotides IMP (inosine 5'-monophosphate) and GMP (guanosine 5'-monophosphate), with the release of PPi. This Aquifex aeolicus (strain VF5) protein is Hypoxanthine-guanine phosphoribosyltransferase (hpt).